A 488-amino-acid polypeptide reads, in one-letter code: Cytochrome P450 monooxygenase orf2 (488 aa).

Residues 7 to 27 (LPGIFLPLAGCVLALSLTTIV) form a helical membrane-spanning segment. Residue Cys432 participates in heme binding.

It belongs to the cytochrome P450 family. It depends on heme as a cofactor.

The protein resides in the membrane. The protein operates within secondary metabolite biosynthesis. Functionally, cytochrome P450 monooxygenase; part of the gene cluster that mediates the biosynthesis of nigerpyrone and its derivatives carbonarone A and pestalamide A. The biosynthesis pathway begins with the polyketide assembly by epaA to form phenylacetyl triketide precursor from successive condensation of two malonyl-CoA, presumably with one phenylacetyl-CoA starter unit produced by the phenylacetyl-CoA ligase epaB. For the nigerpyrone biosynthesis, the reactive polyketide chain is released as an aldehyde through the R-domain. A nonenzymatic cyclization and dehydration may create nigerpyrone. For the biosynthesis of carbonarone A and pestalamide A, an extra methyl group is added through the C-methyltransferase domain. Several further steps involving the dehydrogenase orf1, the cytochrome P450 monooxygenase orf2 and the FAD-dependent monooxygenase orf3 are required to form a carbonarone A precursor which is converted to carbonarone A via cyclization. The O-acetyltransferase epaC could catalyze the transfer of 2-methylsuccinyl-CoA, a common intermediate in the ethylmalonyl-CoA pathway, to generate the final product pestalamide A. This chain is Cytochrome P450 monooxygenase orf2, found in Aspergillus niger (strain ATCC MYA-4892 / CBS 513.88 / FGSC A1513).